A 151-amino-acid chain; its full sequence is Ribosome maturation factor RimP (151 aa).

It belongs to the RimP family.

It localises to the cytoplasm. In terms of biological role, required for maturation of 30S ribosomal subunits. This is Ribosome maturation factor RimP from Shewanella sp. (strain MR-4).